We begin with the raw amino-acid sequence, 219 residues long: 3-demethoxyubiquinol 3-hydroxylase (219 aa).

The disordered stretch occupies residues 21-51 (RTLTPGTTQAERTPAHAAPAPDAPEAGTLPS). Positions 35–46 (AHAAPAPDAPEA) are enriched in low complexity. Glu68, Glu98, His101, Glu150, Glu182, and His185 together coordinate Fe cation.

It belongs to the COQ7 family. Fe cation serves as cofactor.

The protein resides in the cell membrane. It catalyses the reaction a 5-methoxy-2-methyl-3-(all-trans-polyprenyl)benzene-1,4-diol + AH2 + O2 = a 3-demethylubiquinol + A + H2O. It functions in the pathway cofactor biosynthesis; ubiquinone biosynthesis. Functionally, catalyzes the hydroxylation of 2-nonaprenyl-3-methyl-6-methoxy-1,4-benzoquinol during ubiquinone biosynthesis. The sequence is that of 3-demethoxyubiquinol 3-hydroxylase from Alcanivorax borkumensis (strain ATCC 700651 / DSM 11573 / NCIMB 13689 / SK2).